The sequence spans 393 residues: NAD(P)H-quinone oxidoreductase subunit H, chloroplastic (393 aa).

It belongs to the complex I 49 kDa subunit family. As to quaternary structure, NDH is composed of at least 16 different subunits, 5 of which are encoded in the nucleus.

The protein localises to the plastid. Its subcellular location is the chloroplast thylakoid membrane. It catalyses the reaction a plastoquinone + NADH + (n+1) H(+)(in) = a plastoquinol + NAD(+) + n H(+)(out). The catalysed reaction is a plastoquinone + NADPH + (n+1) H(+)(in) = a plastoquinol + NADP(+) + n H(+)(out). Its function is as follows. NDH shuttles electrons from NAD(P)H:plastoquinone, via FMN and iron-sulfur (Fe-S) centers, to quinones in the photosynthetic chain and possibly in a chloroplast respiratory chain. The immediate electron acceptor for the enzyme in this species is believed to be plastoquinone. Couples the redox reaction to proton translocation, and thus conserves the redox energy in a proton gradient. The chain is NAD(P)H-quinone oxidoreductase subunit H, chloroplastic from Huperzia lucidula (Shining clubmoss).